A 602-amino-acid chain; its full sequence is T-box transcription factor TBX15 (602 aa).

The disordered stretch occupies residues 43–95 (SMEALSPAGPLGDTDDPATHGLEPHPDSEQSTGSDSEVLTERTSCSFSTHTDL). Residues 71–94 (EQSTGSDSEVLTERTSCSFSTHTD) show a composition bias toward polar residues. Positions 122–304 (LWKRFHDIGT…RNPFAKGFRD (183 aa)) form a DNA-binding region, T-box. Residue threonine 330 is modified to Phosphothreonine. Disordered stretches follow at residues 338–369 (QKQQ…LSPS) and 425–444 (QSGT…QRTP). Residues 346-369 (GTSPTTSSTGTPSPSASSHLLSPS) show a composition bias toward low complexity.

In terms of assembly, can form a heterodimer with TBX18.

It localises to the nucleus. In terms of biological role, probable transcriptional regulator involved in the development of the skeleton of the limb, vertebral column and head. Acts by controlling the number of mesenchymal precursor cells and chondrocytes. The sequence is that of T-box transcription factor TBX15 (Tbx15) from Mus musculus (Mouse).